An 86-amino-acid chain; its full sequence is Mu-theraphotoxin-Hhn1b 3 (86 aa).

The first 21 residues, 1 to 21 (MKASMFLALTGLALLFVVCYA), serve as a signal peptide directing secretion. The propeptide occupies 22-49 (SESEEKEFSNELLSSVLAVDDNSKGEER). 3 disulfides stabilise this stretch: C51-C66, C58-C73, and C65-C80. The residue at position 84 (I84) is an Isoleucine amide.

Belongs to the neurotoxin 10 (Hwtx-1) family. 22 (Htx-4) subfamily. Monomer. As to expression, expressed by the venom gland.

The protein localises to the secreted. Functionally, neurotoxin. Selectively blocks neuronal tetrodotoxin-sensitive voltage-gated sodium channels (Nav) with an IC(50) of 44.6 nM. Does not affect tetrodotoxin-resistant voltage-gated sodium channels or calcium channels. The protein is Mu-theraphotoxin-Hhn1b 3 of Cyriopagopus hainanus (Chinese bird spider).